The sequence spans 495 residues: Probable cytochrome P450 513C1 (495 aa).

The chain crosses the membrane as a helical span at residues 1-21 (MNYLVLILVSLVSIYFLFIKN). Cys-441 contacts heme.

It belongs to the cytochrome P450 family. Requires heme as cofactor.

The protein resides in the membrane. This Dictyostelium discoideum (Social amoeba) protein is Probable cytochrome P450 513C1 (cyp513C1).